We begin with the raw amino-acid sequence, 66 residues long: MSDVDDTIVDSIAIVGAILIGIFLIVVSVSNTSLFNNTEYDSMINSVLVIISSVIAYTLGKRRSKS.

Topologically, residues 1–6 are cytoplasmic; that stretch reads MSDVDD. The helical transmembrane segment at 7 to 27 threads the bilayer; that stretch reads TIVDSIAIVGAILIGIFLIVV. Over 28-39 the chain is Extracellular; sequence SVSNTSLFNNTE. Residues 40–60 traverse the membrane as a helical segment; it reads YDSMINSVLVIISSVIAYTLG. Topologically, residues 61 to 66 are cytoplasmic; the sequence is KRRSKS.

It localises to the host membrane. The polypeptide is Putative transmembrane protein ORF66 (Acidianus filamentous virus 2 (isolate Italy/Pozzuoli) (AFV-2)).